A 141-amino-acid chain; its full sequence is ATP synthase epsilon chain (141 aa).

The protein belongs to the ATPase epsilon chain family. F-type ATPases have 2 components, CF(1) - the catalytic core - and CF(0) - the membrane proton channel. CF(1) has five subunits: alpha(3), beta(3), gamma(1), delta(1), epsilon(1). CF(0) has three main subunits: a, b and c.

The protein localises to the cell inner membrane. In terms of biological role, produces ATP from ADP in the presence of a proton gradient across the membrane. The polypeptide is ATP synthase epsilon chain (Pseudomonas aeruginosa (strain LESB58)).